A 476-amino-acid chain; its full sequence is Bifunctional protein HldE (476 aa).

The interval 1-319 is ribokinase; it reads MKVSLPAFEK…EALALHHGES (319 aa). 195–198 is an ATP binding site; the sequence is NMSE. Residue Asp-264 is part of the active site. A cytidylyltransferase region spans residues 345-476; sequence MTNGCFDILH…AIIQNIMANQ (132 aa).

This sequence in the N-terminal section; belongs to the carbohydrate kinase PfkB family. The protein in the C-terminal section; belongs to the cytidylyltransferase family. In terms of assembly, homodimer.

It carries out the reaction D-glycero-beta-D-manno-heptose 7-phosphate + ATP = D-glycero-beta-D-manno-heptose 1,7-bisphosphate + ADP + H(+). The catalysed reaction is D-glycero-beta-D-manno-heptose 1-phosphate + ATP + H(+) = ADP-D-glycero-beta-D-manno-heptose + diphosphate. It functions in the pathway nucleotide-sugar biosynthesis; ADP-L-glycero-beta-D-manno-heptose biosynthesis; ADP-L-glycero-beta-D-manno-heptose from D-glycero-beta-D-manno-heptose 7-phosphate: step 1/4. Its pathway is nucleotide-sugar biosynthesis; ADP-L-glycero-beta-D-manno-heptose biosynthesis; ADP-L-glycero-beta-D-manno-heptose from D-glycero-beta-D-manno-heptose 7-phosphate: step 3/4. In terms of biological role, catalyzes the phosphorylation of D-glycero-D-manno-heptose 7-phosphate at the C-1 position to selectively form D-glycero-beta-D-manno-heptose-1,7-bisphosphate. Its function is as follows. Catalyzes the ADP transfer from ATP to D-glycero-beta-D-manno-heptose 1-phosphate, yielding ADP-D-glycero-beta-D-manno-heptose. The polypeptide is Bifunctional protein HldE (Shewanella baltica (strain OS155 / ATCC BAA-1091)).